A 261-amino-acid chain; its full sequence is Homeobox protein ceh-33 (261 aa).

Residues glycine 133–valine 192 constitute a DNA-binding region (homeobox).

It belongs to the SIX/Sine oculis homeobox family.

The protein localises to the nucleus. The chain is Homeobox protein ceh-33 (ceh-33) from Caenorhabditis elegans.